The primary structure comprises 606 residues: Putative mitochondrial ATP-dependent helicase irc3 (606 aa).

The Helicase ATP-binding domain occupies 40–201; sequence NAFDEGKRRI…ACGLDEIVYH (162 aa). Residue 53–60 participates in ATP binding; that stretch reads LATGSGKT. Positions 148–151 match the DEAH box motif; it reads DEVH. Residues 246-398 form the Helicase C-terminal domain; that stretch reads QSEKAIFEIP…LSPDEVENFY (153 aa).

Belongs to the helicase family. IRC3 subfamily.

Its subcellular location is the mitochondrion. This is Putative mitochondrial ATP-dependent helicase irc3 (irc3) from Schizosaccharomyces pombe (strain 972 / ATCC 24843) (Fission yeast).